A 126-amino-acid polypeptide reads, in one-letter code: Probable DNA-directed RNA polymerase II subunit RPB11 (126 aa).

It belongs to the archaeal Rpo11/eukaryotic RPB11/RPC19 RNA polymerase subunit family. In terms of assembly, component of the RNA polymerase II (Pol II) complex consisting of 12 subunits.

Its subcellular location is the nucleus. DNA-dependent RNA polymerase catalyzes the transcription of DNA into RNA using the four ribonucleoside triphosphates as substrates. Component of RNA polymerase II which synthesizes mRNA precursors and many functional non-coding RNAs. Pol II is the central component of the basal RNA polymerase II transcription machinery. It is composed of mobile elements that move relative to each other. RPB11 is part of the core element with the central large cleft. The sequence is that of Probable DNA-directed RNA polymerase II subunit RPB11 from Plasmodium chabaudi chabaudi.